The chain runs to 198 residues: Peptidyl-tRNA hydrolase (198 aa).

Residue Tyr15 participates in tRNA binding. His20 (proton acceptor) is an active-site residue. Positions 65, 67, and 113 each coordinate tRNA.

It belongs to the PTH family. Monomer.

The protein localises to the cytoplasm. The catalysed reaction is an N-acyl-L-alpha-aminoacyl-tRNA + H2O = an N-acyl-L-amino acid + a tRNA + H(+). Functionally, hydrolyzes ribosome-free peptidyl-tRNAs (with 1 or more amino acids incorporated), which drop off the ribosome during protein synthesis, or as a result of ribosome stalling. Catalyzes the release of premature peptidyl moieties from peptidyl-tRNA molecules trapped in stalled 50S ribosomal subunits, and thus maintains levels of free tRNAs and 50S ribosomes. In Ehrlichia chaffeensis (strain ATCC CRL-10679 / Arkansas), this protein is Peptidyl-tRNA hydrolase.